The sequence spans 427 residues: Adenylosuccinate synthetase (427 aa).

GTP contacts are provided by residues 12–18 and 40–42; these read GDEGKGK and GHT. Asp-13 functions as the Proton acceptor in the catalytic mechanism. Mg(2+) contacts are provided by Asp-13 and Gly-40. IMP-binding positions include 13–16, 38–41, Thr-128, Arg-142, Gln-223, Thr-238, and Arg-302; these read DEGK and NAGH. His-41 acts as the Proton donor in catalysis. 298-304 lines the substrate pocket; it reads VTTGRDR. GTP-binding positions include Arg-304, 330–332, and 412–414; these read KLD and GVG.

This sequence belongs to the adenylosuccinate synthetase family. Homodimer. Mg(2+) is required as a cofactor.

It localises to the cytoplasm. It catalyses the reaction IMP + L-aspartate + GTP = N(6)-(1,2-dicarboxyethyl)-AMP + GDP + phosphate + 2 H(+). It participates in purine metabolism; AMP biosynthesis via de novo pathway; AMP from IMP: step 1/2. Its function is as follows. Plays an important role in the de novo pathway of purine nucleotide biosynthesis. Catalyzes the first committed step in the biosynthesis of AMP from IMP. The chain is Adenylosuccinate synthetase from Streptomyces coelicolor (strain ATCC BAA-471 / A3(2) / M145).